Consider the following 188-residue polypeptide: Cytochrome c oxidase assembly protein CtaG (188 aa).

Over 1–8 the chain is Cytoplasmic; it reads MSKKSNKN. A helical; Signal-anchor for type II membrane protein membrane pass occupies residues 9 to 31; sequence LAFSLLGLIISMVLLSFASVPIY. Topologically, residues 32–188 are periplasmic; that stretch reads NLFCKVTGYG…SSLRGNYVSN (157 aa).

The protein belongs to the COX11/CtaG family.

The protein resides in the cell inner membrane. Exerts its effect at some terminal stage of cytochrome c oxidase synthesis, probably by being involved in the insertion of the copper B into subunit I. This chain is Cytochrome c oxidase assembly protein CtaG, found in Rickettsia conorii (strain ATCC VR-613 / Malish 7).